Here is a 472-residue protein sequence, read N- to C-terminus: POU domain, class 5, transcription factor 1 (472 aa).

Disordered stretches follow at residues 127 to 154 (MPSEVKTEKDVEEYGNEENKPPSQYHLT) and 187 to 255 (ISQA…LTTE). Polar residues predominate over residues 220–234 (TAQNIPSAQAQSAPR). The segment covering 235-245 (SSGSSSGGCSN) has biased composition (low complexity). Acidic residues predominate over residues 246 to 255 (SEEEETLTTE). A POU-specific domain is found at 249–323 (EETLTTEDLE…LLQRWLNEAE (75 aa)). The segment at residues 343–402 (KRKRRTSLEGTVRSALESYFVKCPKPNTLEITHISDDLGLERDVVRVWFCNRRQKGKRLA) is a DNA-binding region (homeobox).

This sequence belongs to the POU transcription factor family. Class-7 subfamily.

The protein localises to the nucleus. Functionally, involved in early development of embryos, especially in the process of gastrulation. May play an important role in establishing and specifying rhombomeric segments. Seems to be required to maintain the cells in a highly undifferentiated state. In contrast to POU2, T-POU2 lacks DNA-binding activity because of its incomplete pou domain structure. Overexpression of POU2 does not have any effect on development, whereas overexpression of t-POU2 causes developmental retardation or arrest before gastrulation. The sequence is that of POU domain, class 5, transcription factor 1 (pou5f1) from Danio rerio (Zebrafish).